We begin with the raw amino-acid sequence, 205 residues long: Probable 3'-5' exonuclease KapD (205 aa).

Positions 6–173 (LLIIDFEFTM…DDALTAYKLF (168 aa)) constitute an Exonuclease domain. Mg(2+) contacts are provided by D10, E12, and D104. The Proton acceptor role is filled by E12. Residue E12 coordinates AMP. H160 serves as the catalytic Proton acceptor. H160 is an AMP binding site. Residue D165 participates in Mg(2+) binding.

It depends on Mg(2+) as a cofactor.

Specifically inhibits the KinA pathway to sporulation. The sequence is that of Probable 3'-5' exonuclease KapD (kapD) from Bacillus subtilis (strain 168).